A 346-amino-acid chain; its full sequence is Dihydroorotase (346 aa).

The Zn(2+) site is built by His13 and His15. Residues 15–17 (HLR) and Asn41 each bind substrate. Zn(2+) is bound by residues Lys99, His136, and His174. Position 99 is an N6-carboxylysine (Lys99). His136 is a binding site for substrate. Leu219 is a substrate binding site. Asp247 contacts Zn(2+). Asp247 is an active-site residue. His251 and Ala263 together coordinate substrate.

It belongs to the metallo-dependent hydrolases superfamily. DHOase family. Class II DHOase subfamily. Homodimer. The cofactor is Zn(2+).

It carries out the reaction (S)-dihydroorotate + H2O = N-carbamoyl-L-aspartate + H(+). It participates in pyrimidine metabolism; UMP biosynthesis via de novo pathway; (S)-dihydroorotate from bicarbonate: step 3/3. Its function is as follows. Catalyzes the reversible cyclization of carbamoyl aspartate to dihydroorotate. This chain is Dihydroorotase, found in Chelativorans sp. (strain BNC1).